Here is a 223-residue protein sequence, read N- to C-terminus: Ubiquitin carboxyl-terminal hydrolase isozyme L1 (223 aa).

Met-1 is modified (N-acetylmethionine). In terms of domain architecture, UCH catalytic spans 2–221; the sequence is QLKPMEINPE…VRFSAVALCK (220 aa). Positions 5-10 are interaction with ubiquitin; that stretch reads PMEINP. Cys-90 serves as the catalytic Nucleophile. Ser-125 carries the phosphoserine modification. The active-site Proton donor is His-161. An interaction with ubiquitin region spans residues 211–216; that stretch reads EVRFSA. A lipid anchor (S-farnesyl cysteine) is attached at Cys-220. The propeptide at 221–223 is removed in mature form; sequence KCA.

This sequence belongs to the peptidase C12 family. Monomer. Homodimer. Interacts with COPS5 and SNCA. Post-translationally, O-glycosylated.

Its subcellular location is the cytoplasm. The protein localises to the endoplasmic reticulum membrane. It carries out the reaction Thiol-dependent hydrolysis of ester, thioester, amide, peptide and isopeptide bonds formed by the C-terminal Gly of ubiquitin (a 76-residue protein attached to proteins as an intracellular targeting signal).. Functionally, ubiquitin-protein hydrolase involved both in the processing of ubiquitin precursors and of ubiquitinated proteins. This enzyme is a thiol protease that recognizes and hydrolyzes a peptide bond at the C-terminal glycine of ubiquitin. Also binds to free monoubiquitin and may prevent its degradation in lysosomes. The homodimer may have ATP-independent ubiquitin ligase activity. The chain is Ubiquitin carboxyl-terminal hydrolase isozyme L1 (UCHL1) from Monodelphis domestica (Gray short-tailed opossum).